Reading from the N-terminus, the 144-residue chain is Large ribosomal subunit protein uL15 (144 aa).

Residues 1-49 form a disordered region; the sequence is MRLNTLSPAAGAKSAAKRVGRGIGSGTGKTCGRGHKGQKSRSGGGVRVG. Gly residues predominate over residues 21–31; sequence RGIGSGTGKTC.

It belongs to the universal ribosomal protein uL15 family. In terms of assembly, part of the 50S ribosomal subunit.

Binds to the 23S rRNA. The chain is Large ribosomal subunit protein uL15 from Shewanella halifaxensis (strain HAW-EB4).